A 772-amino-acid polypeptide reads, in one-letter code: Magnetosome formation protease MamE (772 aa).

Residues 1-21 (MTMFNGDVEDGGRSNVSCGKD) lie on the Cytoplasmic side of the membrane. Residues 22-42 (LKRYLMLMGVVALVVLFGAFI) traverse the membrane as a helical segment. Topologically, residues 43–772 (YRQSSGGLRL…RNGQEFWIVL (730 aa)) are lumenal. Residues histidine 187, aspartate 220, and serine 296 each act as charge relay system in the active site. The MCR (magnetochrome) 1 signature appears at 374 to 397 (IAAGTPSPHVDGRQNMDCSNCHDI). Positions 391, 394, 395, 437, 440, 441, 488, 491, and 492 each coordinate heme. 2 consecutive short sequence motifs (MCR) follow at residues 420–443 (IPAN…CHQF) and 470–494 (AIRA…CHQI). Residues 445–558 (GGAAAGPIAF…ALTPLTQRLG (114 aa)) enclose the Cytochrome c domain. PDZ domains lie at 522 to 626 (AINI…LRAG) and 696 to 765 (GATP…HRNG).

It in the N-terminal section; belongs to the peptidase S1C family. As to quaternary structure, might interact with MamB via PDZ1. The cofactor is heme. In terms of processing, the protein isolated from magnetosome membranes has a molecular weight of about 36.3 kDa, probably due to C-terminal cleavage. Subject to autocatalytic cleavage; cleavage also requires MamO; these may be the same event.

Its subcellular location is the magnetosome membrane. Functionally, acts at 2 distinct steps of magnetosome formation; required for correct localization of proteins to the magnetosome while the protease activity is required for maturation of small magnetite crystals into larger, functional ones. Probably cleaves at least itself, MamO and MamP; cleavage requires the putative transprot domain of MamO. Involved in localization of some proteins (at least MamA, MamC, MamF, MamI and MamJ) to the magnetosome. One of 7 genes (mamLQBIEMO) able to induce magnetosome membrane biogenesis; coexpression of mamLQRBIEMO in a deletion of the 17 gene mamAB operon restores magnetosome vesicle formation but not magnetite biosynthesis. The chain is Magnetosome formation protease MamE from Magnetospirillum gryphiswaldense (strain DSM 6361 / JCM 21280 / NBRC 15271 / MSR-1).